The primary structure comprises 98 residues: NADH-ubiquinone oxidoreductase chain 4L (98 aa).

A run of 3 helical transmembrane segments spans residues 1–21 (MPYI…GTLM), 29–49 (SLLC…LLSL), and 61–81 (LILL…LVMI).

This sequence belongs to the complex I subunit 4L family. As to quaternary structure, core subunit of respiratory chain NADH dehydrogenase (Complex I) which is composed of 45 different subunits.

It localises to the mitochondrion inner membrane. The enzyme catalyses a ubiquinone + NADH + 5 H(+)(in) = a ubiquinol + NAD(+) + 4 H(+)(out). Functionally, core subunit of the mitochondrial membrane respiratory chain NADH dehydrogenase (Complex I) which catalyzes electron transfer from NADH through the respiratory chain, using ubiquinone as an electron acceptor. Part of the enzyme membrane arm which is embedded in the lipid bilayer and involved in proton translocation. In Loxodonta africana (African elephant), this protein is NADH-ubiquinone oxidoreductase chain 4L (MT-ND4L).